A 327-amino-acid polypeptide reads, in one-letter code: Acetyl-coenzyme A carboxylase carboxyl transferase subunit alpha (327 aa).

The region spanning 46–299 (LEARAIQLRR…RQVLLRHLKD (254 aa)) is the CoA carboxyltransferase C-terminal domain.

The protein belongs to the AccA family. In terms of assembly, acetyl-CoA carboxylase is a heterohexamer composed of biotin carboxyl carrier protein (AccB), biotin carboxylase (AccC) and two subunits each of ACCase subunit alpha (AccA) and ACCase subunit beta (AccD).

Its subcellular location is the cytoplasm. The enzyme catalyses N(6)-carboxybiotinyl-L-lysyl-[protein] + acetyl-CoA = N(6)-biotinyl-L-lysyl-[protein] + malonyl-CoA. The protein operates within lipid metabolism; malonyl-CoA biosynthesis; malonyl-CoA from acetyl-CoA: step 1/1. Component of the acetyl coenzyme A carboxylase (ACC) complex. First, biotin carboxylase catalyzes the carboxylation of biotin on its carrier protein (BCCP) and then the CO(2) group is transferred by the carboxyltransferase to acetyl-CoA to form malonyl-CoA. The protein is Acetyl-coenzyme A carboxylase carboxyl transferase subunit alpha of Synechococcus elongatus (strain ATCC 33912 / PCC 7942 / FACHB-805) (Anacystis nidulans R2).